The primary structure comprises 85 residues: Large ribosomal subunit protein bL27 (85 aa).

Residues 1 to 21 (MAHKKAGGSTRNGRDSESKRL) are disordered.

The protein belongs to the bacterial ribosomal protein bL27 family.

The sequence is that of Large ribosomal subunit protein bL27 from Pseudomonas putida (strain W619).